Here is an 867-residue protein sequence, read N- to C-terminus: MHYLLSRLLHQRQLNASAQLFNVSHYDVITDMSNTFTCLKEIINDPTYPFNKVDQSVVEIVIARLTAAIRETGSIESYAAELVDVLDEVLKHPMTTLNEKSRDVDSPHCKIASDLLSSLFLHYGKKSVMTLTIPVALKCLNSENAELVKNTTSYISLAAIHNGKSLSSHALQIITKVVKGNYSLIRVLPHIYQDNKEPFHAQLSQLIDLLQNQEVDCSEKLSLLQLASMVANTKPEVLIPYLPRFDVYLLSPQLSTALLNIYMSLISQNRTKALSQFLPTLKLAAQSNEFVNNRTTICKIIANIGRVSSTLASEAVDELVLMARHNLAEPQLLQSVLNEIEAIGSMYPTSLRRHVAFFQTLPSSRTIERILGHLNLNNENIPLEVKKQSTESLLSKNSKVFGNLITSGGRTVFEVCESPTVELCELDRNTHSLAMQYQNNRSSGSLSRRSHASIAHSLGAGTHGPYSDINESRELSMISMPSSSRTNVHLSQAASSSRGHSLPQTFSPQAMTQIQMGKDGRVRPVAGGRRPVQWPAGSTETTFPAHLGPVTTSKMCALNEEDEKWINSDRNDVVYKFVEHRKNKIRRYIGEVNTRFPIPVQCTVEGSKSSKHRMVIHFSCQTRSSPCCVFTKEYLFAFKTKYPAFWLHFMFLQMECSAITQFGEVAGKDSQQYQTLEHCWKCLPSSTTKNVLFDTMITAAFPNSKDQDKLIKELDEAGFFAYFTMDSSNNMWNCISCTNPEKVKYFVEEGGVEKVLEGQLKEKKGRWRFLKRWNTKYFTLSSAALNYSTQHMPTDSRALLPSIDLRSIRSVRSLGRGKKARKSLRKAFEIFTADNTSMILKAKDEKNAEEWLHCLQIAMAHARRELS.

Positions 480–505 (MPSSSRTNVHLSQAASSSRGHSLPQT) are disordered. The region spanning 753–860 (EKVLEGQLKE…WLHCLQIAMA (108 aa)) is the PH domain.

This sequence belongs to the MELT/VEPH family.

Its subcellular location is the cell membrane. In Caenorhabditis briggsae, this protein is Protein melted homolog.